Reading from the N-terminus, the 541-residue chain is Circadian clock oscillator protein KaiC (541 aa).

Residues 1-40 (MNQSLGPSEPEKPQDNTAEDSTEPTPDNHRADLSELRGIP) are disordered. KaiC domains lie at 21–268 (STEP…INIF) and 282–541 (VRVS…EEGL). The segment covering 26-35 (PDNHRADLSE) has biased composition (basic and acidic residues). Positions 70, 71, 72, 73, 74, 75, 110, 245, 246, 247, 249, 251, 261, 311, 312, 313, 314, 315, and 316 each coordinate ATP. Residue T74 participates in Mg(2+) binding. The Mg(2+) site is built by T316 and E339. W352 contacts ATP. S452 carries the post-translational modification Phosphoserine; by autocatalysis. Phosphothreonine; by autocatalysis is present on T453. ATP contacts are provided by R472, K478, M479, R480, S482, H484, and K486.

Belongs to the KaiC family. Homohexamer; hexamerization is dependent on ATP-binding. The KaiABC complex composition changes during the circadian cycle to control KaiC phosphorylation. Complexes KaiC(6), KaiA(2-4):KaiC(6), KaiB(6):KaiC(6) and KaiC(6):KaiB(6):KaiA(12) are among the most important forms, many form cooperatively. KaiC interacts with SasA, activating its autokinase function and leading to RpaA activation. Mg(2+) serves as cofactor. Phosphorylated on serine and threonine residues by autocatalysis. Has a 4 step phosphorylation cycle; the autokinase acts first on Thr-453, then Ser-452. When Ser-452 is modified KaiC switches to an autophosphatase mode, acting first on phospho-Thr-453 then phospho-Ser-452.

It carries out the reaction L-seryl-[protein] + ATP = O-phospho-L-seryl-[protein] + ADP + H(+). The enzyme catalyses L-threonyl-[protein] + ATP = O-phospho-L-threonyl-[protein] + ADP + H(+). It catalyses the reaction ATP + H2O = ADP + phosphate + H(+). Its activity is regulated as follows. The interaction with KaiA enhances its phosphorylation status, while the interaction with KaiB decreases it. Its function is as follows. Central component of the KaiABC oscillator complex, which constitutes the main circadian regulator in cyanobacteria. Complex composition changes during the circadian cycle to control KaiC phosphorylation. KaiA stimulates KaiC autophosphorylation, while KaiB sequesters KaiA, leading to KaiC autodephosphorylation. Clock output pathways impact the RpaA transcriptional regulator. KaiC enhances the autophosphorylation activity of SasA, which then transfers its phosphate group to RpaA to activate it. KaiB and KaiC together enhance the phospho-RpaA dephosphatase activity of CikA. In terms of biological role, has a weak, temperature-independent ATPase activity; ATPase activity defines the circadian period. The phosphorylation state of KaiC modulates its ATPase activity and effects KaiB binding. This chain is Circadian clock oscillator protein KaiC, found in Parathermosynechococcus lividus (Thermostichus lividus).